We begin with the raw amino-acid sequence, 111 residues long: uncharacterized protein (111 aa).

Residues 27–47 (HLFHFPSISFFFFFFFFFFSF) form a helical membrane-spanning segment.

It localises to the membrane. This is an uncharacterized protein from Saccharomyces cerevisiae (strain ATCC 204508 / S288c) (Baker's yeast).